We begin with the raw amino-acid sequence, 98 residues long: Integration host factor subunit alpha (98 aa).

Residues 49 to 71 (FGNFDLRDKNQRPGRNPKTGEDI) form a disordered region.

This sequence belongs to the bacterial histone-like protein family. In terms of assembly, heterodimer of an alpha and a beta chain.

This protein is one of the two subunits of integration host factor, a specific DNA-binding protein that functions in genetic recombination as well as in transcriptional and translational control. The chain is Integration host factor subunit alpha from Shewanella oneidensis (strain ATCC 700550 / JCM 31522 / CIP 106686 / LMG 19005 / NCIMB 14063 / MR-1).